Here is a 240-residue protein sequence, read N- to C-terminus: Ubiquinone biosynthesis O-methyltransferase (240 aa).

S-adenosyl-L-methionine contacts are provided by R44, G64, D85, and M129.

Belongs to the methyltransferase superfamily. UbiG/COQ3 family.

It catalyses the reaction a 3-demethylubiquinol + S-adenosyl-L-methionine = a ubiquinol + S-adenosyl-L-homocysteine + H(+). The enzyme catalyses a 3-(all-trans-polyprenyl)benzene-1,2-diol + S-adenosyl-L-methionine = a 2-methoxy-6-(all-trans-polyprenyl)phenol + S-adenosyl-L-homocysteine + H(+). It functions in the pathway cofactor biosynthesis; ubiquinone biosynthesis. Functionally, O-methyltransferase that catalyzes the 2 O-methylation steps in the ubiquinone biosynthetic pathway. In Escherichia coli O9:H4 (strain HS), this protein is Ubiquinone biosynthesis O-methyltransferase.